A 505-amino-acid polypeptide reads, in one-letter code: Glutamyl-tRNA(Gln) amidotransferase subunit B, mitochondrial (505 aa).

It belongs to the GatB/GatE family. GatB subfamily. Subunit of the heterotrimeric GatCAB amidotransferase (AdT) complex, composed of A, B and C subunits.

The protein resides in the mitochondrion. It catalyses the reaction L-glutamyl-tRNA(Gln) + L-glutamine + ATP + H2O = L-glutaminyl-tRNA(Gln) + L-glutamate + ADP + phosphate + H(+). Allows the formation of correctly charged Gln-tRNA(Gln) through the transamidation of misacylated Glu-tRNA(Gln) in the mitochondria. The reaction takes place in the presence of glutamine and ATP through an activated gamma-phospho-Glu-tRNA(Gln). This Schizosaccharomyces japonicus (strain yFS275 / FY16936) (Fission yeast) protein is Glutamyl-tRNA(Gln) amidotransferase subunit B, mitochondrial.